Consider the following 519-residue polypeptide: Membrane protein insertase YidC (519 aa).

The next 6 helical transmembrane spans lie at 6–26 (ILFVTLSAFTVFIWYFFFAQP), 298–318 (VDFGFFGFLGKIAFSILVFFY), 324–344 (YGWAIIMLTTIIQILVLPLTL), 390–410 (LGGCLPMLLQLPIFWAFFTML), 434–454 (FMQFGSFNLNLLPLMMGIGMF), and 471–491 (IMYIMPVIFTFMFWSFPSGLV).

The protein belongs to the OXA1/ALB3/YidC family. Type 1 subfamily. In terms of assembly, interacts with the Sec translocase complex via SecD. Specifically interacts with transmembrane segments of nascent integral membrane proteins during membrane integration.

It localises to the cell inner membrane. In terms of biological role, required for the insertion and/or proper folding and/or complex formation of integral membrane proteins into the membrane. Involved in integration of membrane proteins that insert both dependently and independently of the Sec translocase complex, as well as at least some lipoproteins. Aids folding of multispanning membrane proteins. The polypeptide is Membrane protein insertase YidC (Endomicrobium trichonymphae).